Reading from the N-terminus, the 677-residue chain is Protein PALS1 (677 aa).

Positions 1–347 (MTTSHMNGYV…AQIKSPPIKE (347 aa)) are required for the correct localization of PALS1 and PATJ at cell-cell contacts and the normal formation of tight junctions and adherens junctions. The tract at residues 39 to 81 (ELGARTLPVRRSAQLEKIRQQQEDRRRREEEGRSRQELDLNSS) is disordered. Over residues 51–76 (AQLEKIRQQQEDRRRREEEGRSRQEL) the composition is skewed to basic and acidic residues. 2 L27 domains span residues 121 to 178 (ALLE…NRPS) and 180 to 236 (PYPL…MQLE). Positions 258-338 (IVRIEKAKDI…VLSFVLIPSA (81 aa)) constitute a PDZ domain. The SH3 domain maps to 347 to 419 (ETVVHVKAHF…PGKSFQQQRE (73 aa)). The Guanylate kinase-like domain occupies 481–662 (KRPIALIGPP…SYQELLRLIN (182 aa)). 488 to 495 (GPPNCGQN) is a binding site for ATP. The disordered stretch occupies residues 506-526 (PDRFAGPVPHTTRSRRDAEAN).

This sequence belongs to the MAGUK family. In terms of tissue distribution, expressed in the retina and in the neural tube.

The protein resides in the apical cell membrane. It is found in the cell junction. Its subcellular location is the tight junction. Functionally, plays a role in tight junction biogenesis and in the establishment of cell polarity in epithelial cells. Also involved in adherens junction biogenesis. Required for polarized epithelial organization, cell-cell adhesion and remodeling of myocardial cells during heart tube elongation during embryogenesis. Functions in cellular patterning of the retina and development of the retinal pigmented epithelium. Also required for embryo body axis specification. In Danio rerio (Zebrafish), this protein is Protein PALS1 (pals1a).